Reading from the N-terminus, the 205-residue chain is Thymidylate kinase (205 aa).

10–17 (GTEGVGKS) contacts ATP.

The protein belongs to the thymidylate kinase family.

The catalysed reaction is dTMP + ATP = dTDP + ADP. In terms of biological role, phosphorylation of dTMP to form dTDP in both de novo and salvage pathways of dTTP synthesis. The polypeptide is Thymidylate kinase (Teredinibacter turnerae (strain ATCC 39867 / T7901)).